The following is a 214-amino-acid chain: Adenylate kinase (214 aa).

10–15 (GVGKGT) provides a ligand contact to ATP. The tract at residues 30–59 (STGDILRAAVKELTPMGAKAKGYMDSGALV) is NMP. AMP is bound by residues Thr31, Arg36, 57 to 59 (ALV), 85 to 88 (GFPR), and Gln92. Positions 126-163 (GRRACANCGAGYHVDFAPSKVAGVCDACSGQLVQREDD) are LID. Position 127 (Arg127) interacts with ATP. The Zn(2+) site is built by Cys130, Cys133, Cys150, and Cys153. Positions 160 and 171 each coordinate AMP. Gly199 serves as a coordination point for ATP.

This sequence belongs to the adenylate kinase family. In terms of assembly, monomer.

It is found in the cytoplasm. The enzyme catalyses AMP + ATP = 2 ADP. Its pathway is purine metabolism; AMP biosynthesis via salvage pathway; AMP from ADP: step 1/1. Functionally, catalyzes the reversible transfer of the terminal phosphate group between ATP and AMP. Plays an important role in cellular energy homeostasis and in adenine nucleotide metabolism. In Geobacter sp. (strain M21), this protein is Adenylate kinase.